The primary structure comprises 494 residues: Aspartyl/glutamyl-tRNA(Asn/Gln) amidotransferase subunit B (494 aa).

It belongs to the GatB/GatE family. GatB subfamily. Heterotrimer of A, B and C subunits.

It catalyses the reaction L-glutamyl-tRNA(Gln) + L-glutamine + ATP + H2O = L-glutaminyl-tRNA(Gln) + L-glutamate + ADP + phosphate + H(+). The catalysed reaction is L-aspartyl-tRNA(Asn) + L-glutamine + ATP + H2O = L-asparaginyl-tRNA(Asn) + L-glutamate + ADP + phosphate + 2 H(+). Functionally, allows the formation of correctly charged Asn-tRNA(Asn) or Gln-tRNA(Gln) through the transamidation of misacylated Asp-tRNA(Asn) or Glu-tRNA(Gln) in organisms which lack either or both of asparaginyl-tRNA or glutaminyl-tRNA synthetases. The reaction takes place in the presence of glutamine and ATP through an activated phospho-Asp-tRNA(Asn) or phospho-Glu-tRNA(Gln). This is Aspartyl/glutamyl-tRNA(Asn/Gln) amidotransferase subunit B from Protochlamydia amoebophila (strain UWE25).